Here is an 81-residue protein sequence, read N- to C-terminus: ATP synthase subunit c, chloroplastic (81 aa).

Helical transmembrane passes span 3–23 (AIVS…AAIG) and 57–77 (LAFM…LLFA).

This sequence belongs to the ATPase C chain family. In terms of assembly, F-type ATPases have 2 components, F(1) - the catalytic core - and F(0) - the membrane proton channel. F(1) has five subunits: alpha(3), beta(3), gamma(1), delta(1), epsilon(1). F(0) has four main subunits: a(1), b(1), b'(1) and c(10-14). The alpha and beta chains form an alternating ring which encloses part of the gamma chain. F(1) is attached to F(0) by a central stalk formed by the gamma and epsilon chains, while a peripheral stalk is formed by the delta, b and b' chains.

The protein resides in the plastid. Its subcellular location is the chloroplast thylakoid membrane. Functionally, f(1)F(0) ATP synthase produces ATP from ADP in the presence of a proton or sodium gradient. F-type ATPases consist of two structural domains, F(1) containing the extramembraneous catalytic core and F(0) containing the membrane proton channel, linked together by a central stalk and a peripheral stalk. During catalysis, ATP synthesis in the catalytic domain of F(1) is coupled via a rotary mechanism of the central stalk subunits to proton translocation. In terms of biological role, key component of the F(0) channel; it plays a direct role in translocation across the membrane. A homomeric c-ring of between 10-14 subunits forms the central stalk rotor element with the F(1) delta and epsilon subunits. The sequence is that of ATP synthase subunit c, chloroplastic from Cyanidioschyzon merolae (strain NIES-3377 / 10D) (Unicellular red alga).